The primary structure comprises 718 residues: Heme peroxidase 2 (718 aa).

Positions 1–19 (MNLKPTILLFTILFLKCAT) are cleaved as a signal peptide. The propeptide occupies 20–146 (FEVNEETERI…QANRRCSSPP (127 aa)). Disordered stretches follow at residues 41-64 (RASE…ANSD) and 108-144 (LLQS…RCSS). Residues 45–64 (NSESEQTSQHIIVSQQANSD) are compositionally biased toward polar residues. Over residues 109–118 (LQSSETTTTT) the composition is skewed to low complexity. Positions 126–139 (SKRSAIFRSKRQAN) are enriched in basic residues. Cysteine 149 and cysteine 164 are joined by a disulfide. The active-site Proton acceptor is the histidine 241. A Ca(2+)-binding site is contributed by aspartate 242. Residues cysteine 262 and cysteine 272 are joined by a disulfide bond. Residues serine 311, phenylalanine 313, aspartate 315, and serine 317 each contribute to the Ca(2+) site. Asparagine 354 carries an N-linked (GlcNAc...) asparagine glycan. Cysteine 358 and cysteine 366 are oxidised to a cystine. Histidine 477 is a binding site for heme b. Residues asparagine 551, asparagine 592, asparagine 662, and asparagine 673 are each glycosylated (N-linked (GlcNAc...) asparagine). Cysteine 682 and cysteine 705 are disulfide-bonded.

This sequence belongs to the peroxidase family. Heme b is required as a cofactor. Expressed in the hypodermis and gland cells of the pharynx. Specifically, there is low and transient expression from the distal bulb of the pharynx to the anterior of the buccal cavity. Whole body expression levels increase upon entry into the dauer phase.

It is found in the secreted. The catalysed reaction is 2 a phenolic donor + H2O2 = 2 a phenolic radical donor + 2 H2O. In terms of biological role, peroxidase which is involved in maintaining the cuticle integrity in the hypodermis and pharynx. It thus plays a role in conferring resistance against Gram-positive bacteria such as E.faecalis, S.aureus and C.diphtheriae, and yeast such as C.albicans. The protein is Heme peroxidase 2 of Caenorhabditis elegans.